Consider the following 268-residue polypeptide: Sterol uptake protein 2 (268 aa).

The protein belongs to the SUT1 family.

The protein resides in the nucleus. In terms of biological role, putative transcription factor involved in the regulation of the activity of the cAMP/protein kinase A pathway. Involved in sterol uptake. With SUT1, positively regulates mating by repressing the expression of the mating inhibitors NCE102, PRR2 and RHO5 in response to pheromone. This Saccharomyces cerevisiae (strain ATCC 204508 / S288c) (Baker's yeast) protein is Sterol uptake protein 2.